The primary structure comprises 79 residues: Acyl carrier protein (79 aa).

The Carrier domain maps to 2 to 77; the sequence is SNIEERVKKI…QAIDYINAHA (76 aa). S37 is subject to O-(pantetheine 4'-phosphoryl)serine.

This sequence belongs to the acyl carrier protein (ACP) family. 4'-phosphopantetheine is transferred from CoA to a specific serine of apo-ACP by AcpS. This modification is essential for activity because fatty acids are bound in thioester linkage to the sulfhydryl of the prosthetic group.

Its subcellular location is the cytoplasm. The protein operates within lipid metabolism; fatty acid biosynthesis. In terms of biological role, carrier of the growing fatty acid chain in fatty acid biosynthesis. The polypeptide is Acyl carrier protein (Thioalkalivibrio sulfidiphilus (strain HL-EbGR7)).